Here is an 83-residue protein sequence, read N- to C-terminus: MPAIEVGRIAVIIAGRRAGQKVVVVDVIDKNFVLVTGAGLNKVKRRRMNVKHLEPLPERVNIERGADDEAVKAALEQAGISLE.

It belongs to the eukaryotic ribosomal protein eL14 family.

In Thermococcus onnurineus (strain NA1), this protein is Large ribosomal subunit protein eL14.